Reading from the N-terminus, the 465-residue chain is Cysteine--tRNA ligase (465 aa).

Position 28 (Cys28) interacts with Zn(2+). The short motif at 30–40 (MTVYDYCHLGH) is the 'HIGH' region element. 3 residues coordinate Zn(2+): Cys209, His234, and Glu238. The short motif at 266–270 (KMSKS) is the 'KMSKS' region element. Lys269 contacts ATP.

The protein belongs to the class-I aminoacyl-tRNA synthetase family. As to quaternary structure, monomer. Zn(2+) serves as cofactor.

It is found in the cytoplasm. The catalysed reaction is tRNA(Cys) + L-cysteine + ATP = L-cysteinyl-tRNA(Cys) + AMP + diphosphate. The sequence is that of Cysteine--tRNA ligase from Nitrosomonas europaea (strain ATCC 19718 / CIP 103999 / KCTC 2705 / NBRC 14298).